Reading from the N-terminus, the 120-residue chain is Ribonuclease P protein component 2 (120 aa).

This sequence belongs to the eukaryotic/archaeal RNase P protein component 2 family. As to quaternary structure, consists of a catalytic RNA component and at least 4-5 protein subunits.

It is found in the cytoplasm. The catalysed reaction is Endonucleolytic cleavage of RNA, removing 5'-extranucleotides from tRNA precursor.. Its function is as follows. Part of ribonuclease P, a protein complex that generates mature tRNA molecules by cleaving their 5'-ends. The polypeptide is Ribonuclease P protein component 2 (Methanobrevibacter smithii (strain ATCC 35061 / DSM 861 / OCM 144 / PS)).